We begin with the raw amino-acid sequence, 110 residues long: MIQKEILEELKDLDYIHGVLLIKNDGLVEYSSLSEDSNMESLGARLSIILNSISEVIKDIYNEKTECVFIKVKDDGIILIPKDNEILTILFKANNDILHKIIPIIQEIIK.

This is an uncharacterized protein from Methanocaldococcus jannaschii (strain ATCC 43067 / DSM 2661 / JAL-1 / JCM 10045 / NBRC 100440) (Methanococcus jannaschii).